The following is a 437-amino-acid chain: Four-jointed box protein 1 (437 aa).

Positions 1–24 (MGRRMRGAAATAGLWLLALGSLLA) are cleaved as a signal peptide. Disordered regions lie at residues 33–66 (RTEL…PLPP) and 88–116 (AGAD…EESA). Over residues 57–66 (APAPRFPLPP) the composition is skewed to pro residues. N-linked (GlcNAc...) asparagine glycosylation occurs at asparagine 248.

Belongs to the FJX1/FJ family. Post-translationally, glycosylated. Undergoes proteolytic cleavage.

Its subcellular location is the secreted. Functionally, acts as an inhibitor of dendrite extension and branching. The polypeptide is Four-jointed box protein 1 (FJX1) (Homo sapiens (Human)).